Consider the following 747-residue polypeptide: Pentatricopeptide repeat-containing protein At5g39710 (747 aa).

PPR repeat units follow at residues 133 to 167 (TSSV…GFMP), 168 to 203 (GVLS…QVSP), 204 to 238 (NVFT…GCLP), 239 to 273 (NVVT…GLEP), 274 to 308 (NLIS…GYSL), 309 to 343 (DEVT…GLTP), 344 to 378 (SVIT…GLCP), 379 to 413 (NERT…GFSP), 414 to 448 (SVVT…GLSP), 449 to 483 (DVVS…GIKP), 484 to 518 (DTIT…GLPP), 519 to 553 (DEFT…GVLP), 554 to 588 (DVVT…ESVP), 604 to 638 (EFKS…NHKP), and 639 to 673 (DGTA…GFLL).

It belongs to the PPR family. P subfamily.

This Arabidopsis thaliana (Mouse-ear cress) protein is Pentatricopeptide repeat-containing protein At5g39710 (EMB2745).